We begin with the raw amino-acid sequence, 160 residues long: Cyclic pyranopterin monophosphate synthase (160 aa).

Substrate contacts are provided by residues 73–75 (LCH) and 110–111 (ME). The active site involves Asp125.

Belongs to the MoaC family. In terms of assembly, homohexamer; trimer of dimers.

It carries out the reaction (8S)-3',8-cyclo-7,8-dihydroguanosine 5'-triphosphate = cyclic pyranopterin phosphate + diphosphate. The protein operates within cofactor biosynthesis; molybdopterin biosynthesis. Functionally, catalyzes the conversion of (8S)-3',8-cyclo-7,8-dihydroguanosine 5'-triphosphate to cyclic pyranopterin monophosphate (cPMP). This is Cyclic pyranopterin monophosphate synthase from Pseudomonas aeruginosa (strain LESB58).